The primary structure comprises 104 residues: Large ribosomal subunit protein uL24 (104 aa).

Belongs to the universal ribosomal protein uL24 family. In terms of assembly, part of the 50S ribosomal subunit.

One of two assembly initiator proteins, it binds directly to the 5'-end of the 23S rRNA, where it nucleates assembly of the 50S subunit. Functionally, one of the proteins that surrounds the polypeptide exit tunnel on the outside of the subunit. In Pseudoalteromonas atlantica (strain T6c / ATCC BAA-1087), this protein is Large ribosomal subunit protein uL24.